The sequence spans 261 residues: Imidazole glycerol phosphate synthase subunit HisF (261 aa).

Residues Asp-16 and Asp-135 contribute to the active site.

The protein belongs to the HisA/HisF family. As to quaternary structure, heterodimer of HisH and HisF.

It is found in the cytoplasm. The catalysed reaction is 5-[(5-phospho-1-deoxy-D-ribulos-1-ylimino)methylamino]-1-(5-phospho-beta-D-ribosyl)imidazole-4-carboxamide + L-glutamine = D-erythro-1-(imidazol-4-yl)glycerol 3-phosphate + 5-amino-1-(5-phospho-beta-D-ribosyl)imidazole-4-carboxamide + L-glutamate + H(+). The protein operates within amino-acid biosynthesis; L-histidine biosynthesis; L-histidine from 5-phospho-alpha-D-ribose 1-diphosphate: step 5/9. In terms of biological role, IGPS catalyzes the conversion of PRFAR and glutamine to IGP, AICAR and glutamate. The HisF subunit catalyzes the cyclization activity that produces IGP and AICAR from PRFAR using the ammonia provided by the HisH subunit. The sequence is that of Imidazole glycerol phosphate synthase subunit HisF from Mycobacterium sp. (strain JLS).